The chain runs to 329 residues: Glycerol-3-phosphate dehydrogenase [NAD(P)+] (329 aa).

Positions 13, 14, 34, and 105 each coordinate NADPH. Sn-glycerol 3-phosphate is bound by residues Lys105, Gly134, and Ser136. An NADPH-binding site is contributed by Ala138. Residues Lys189, Asp242, Ser252, Arg253, and Asn254 each contribute to the sn-glycerol 3-phosphate site. The Proton acceptor role is filled by Lys189. An NADPH-binding site is contributed by Arg253. NADPH contacts are provided by Val277 and Glu279.

The protein belongs to the NAD-dependent glycerol-3-phosphate dehydrogenase family.

The protein resides in the cytoplasm. It carries out the reaction sn-glycerol 3-phosphate + NAD(+) = dihydroxyacetone phosphate + NADH + H(+). The catalysed reaction is sn-glycerol 3-phosphate + NADP(+) = dihydroxyacetone phosphate + NADPH + H(+). It functions in the pathway membrane lipid metabolism; glycerophospholipid metabolism. In terms of biological role, catalyzes the reduction of the glycolytic intermediate dihydroxyacetone phosphate (DHAP) to sn-glycerol 3-phosphate (G3P), the key precursor for phospholipid synthesis. The sequence is that of Glycerol-3-phosphate dehydrogenase [NAD(P)+] from Legionella pneumophila (strain Paris).